A 287-amino-acid chain; its full sequence is Bifunctional protein FolD (287 aa).

NADP(+) is bound by residues 171–173 (GHS), Ile196, and Ile237.

It belongs to the tetrahydrofolate dehydrogenase/cyclohydrolase family. In terms of assembly, homodimer.

It catalyses the reaction (6R)-5,10-methylene-5,6,7,8-tetrahydrofolate + NADP(+) = (6R)-5,10-methenyltetrahydrofolate + NADPH. It carries out the reaction (6R)-5,10-methenyltetrahydrofolate + H2O = (6R)-10-formyltetrahydrofolate + H(+). Its pathway is one-carbon metabolism; tetrahydrofolate interconversion. Its function is as follows. Catalyzes the oxidation of 5,10-methylenetetrahydrofolate to 5,10-methenyltetrahydrofolate and then the hydrolysis of 5,10-methenyltetrahydrofolate to 10-formyltetrahydrofolate. The protein is Bifunctional protein FolD of Methanosarcina mazei (strain ATCC BAA-159 / DSM 3647 / Goe1 / Go1 / JCM 11833 / OCM 88) (Methanosarcina frisia).